The sequence spans 576 residues: Homeobox protein invected (576 aa).

Disordered stretches follow at residues 1–68, 80–102, 305–344, 364–410, and 426–476; these read MSTL…DEQT, EVEE…NSVL, GGSV…LAQS, NSND…GEDS, and SDRP…RPRT. Acidic residues predominate over residues 80 to 91; sequence EVEEEHDLDLED. Low complexity-rich tracts occupy residues 309–325, 364–381, and 395–405; these read SGSS…TNGN, NSND…TNTS, and AGAGATGASGK. Positions 450-468 are enriched in gly residues; sequence AGGGGGGVEKGEAADGGGV. The segment at residues 471–530 is a DNA-binding region (homeobox); the sequence is DKRPRTAFSGTQLARLKHEFNENRYLTEKRRQQLSGELGLNEAQIKIWFQNKRAKLKKSS.

This sequence belongs to the engrailed homeobox family. Expressed in row 6/7 of the embryonic neuroectoderm.

It is found in the nucleus. Functionally, engrailed (en) and invected (inv) are functionally redundant transcription factors in neuronal precursor cell NB5-3 specification. Inv is unable to substitute for en in other regulatory processes such as maintaining gsb expression in the neuroectoderm after stage 10 of embryogenesis. Maintenance of gsb expression in row 5 of the neuroectoderm involves an as yet unidentified short range signaling molecule. This is Homeobox protein invected (inv) from Drosophila melanogaster (Fruit fly).